A 481-amino-acid polypeptide reads, in one-letter code: 3-isopropylmalate dehydratase large subunit (481 aa).

3 residues coordinate [4Fe-4S] cluster: Cys-363, Cys-423, and Cys-426. Residues 432–459 (DQLKPGERSASTSNRNFEGRQGPGGRTH) form a disordered region.

The protein belongs to the aconitase/IPM isomerase family. LeuC type 1 subfamily. As to quaternary structure, heterodimer of LeuC and LeuD. [4Fe-4S] cluster is required as a cofactor.

It carries out the reaction (2R,3S)-3-isopropylmalate = (2S)-2-isopropylmalate. It participates in amino-acid biosynthesis; L-leucine biosynthesis; L-leucine from 3-methyl-2-oxobutanoate: step 2/4. In terms of biological role, catalyzes the isomerization between 2-isopropylmalate and 3-isopropylmalate, via the formation of 2-isopropylmaleate. The sequence is that of 3-isopropylmalate dehydratase large subunit from Corynebacterium glutamicum (strain R).